Consider the following 261-residue polypeptide: MSLPASFDLTPEDAKLLLAANVHLGSKNVQVHNKPYVYKTRPDGVNVINIGKTWEKIVLAARIIAAVPNPSDVAVCSSRTFGQRAVLKFAAHTGATPIAGRFTPGNFTNYITRSFKEPRLVVVTDPRTDAQAIKESSYVNIPVIALTDMDSPSEYVDVAIPCNNKGKHSIGLIWWLIAREVLRLRGIIPDRTTEWSVMPDLYFYRDPEEIEQNAAEEAKTTEDVEEAAPVDADEWTGETEEVDWAESGATPAVEDAAASNW.

Ser-2 bears the N-acetylserine mark. The interval Ala-215–Trp-261 is disordered. A compositionally biased stretch (acidic residues) spans Asp-223–Trp-244.

It belongs to the universal ribosomal protein uS2 family. In terms of assembly, component of the small ribosomal subunit. Mature ribosomes consist of a small (40S) and a large (60S) subunit. The 40S subunit contains about 33 different proteins and 1 molecule of RNA (18S). The 60S subunit contains about 49 different proteins and 3 molecules of RNA (25S, 5.8S and 5S). Interacts with RPS21.

It is found in the cytoplasm. In terms of biological role, required for the assembly and/or stability of the 40S ribosomal subunit. Required for the processing of the 20S rRNA-precursor to mature 18S rRNA in a late step of the maturation of 40S ribosomal subunits. This is Small ribosomal subunit protein uS2 from Scheffersomyces stipitis (strain ATCC 58785 / CBS 6054 / NBRC 10063 / NRRL Y-11545) (Yeast).